Here is a 224-residue protein sequence, read N- to C-terminus: DNA repair and recombination protein RadB (224 aa).

The protein belongs to the eukaryotic RecA-like protein family. RadB subfamily.

In terms of biological role, involved in DNA repair and in homologous recombination. May regulate the cleavage reactions of the branch-structured DNA. Has a very weak ATPase activity that is not stimulated by DNA. Binds DNA but does not promote DNA strands exchange. The protein is DNA repair and recombination protein RadB of Thermococcus onnurineus (strain NA1).